Here is a 343-residue protein sequence, read N- to C-terminus: Globoside alpha-1,3-N-acetylgalactosaminyltransferase 1 (343 aa).

Residues 1–6 (MISRKA) are Cytoplasmic-facing. A helical; Signal-anchor for type II membrane protein transmembrane segment spans residues 7 to 27 (LGSLVCLSAVATLIWIASGNW). The Lumenal portion of the chain corresponds to 28 to 343 (KVHYLPYYLP…VDKNYQEVRN (316 aa)). Asparagine 104 carries an N-linked (GlcNAc...) asparagine glycan. Substrate contacts are provided by residues 112–117 (FAVGKY), 202–204 (DID), and 224–227 (HPGY). Mn(2+) is bound by residues aspartate 202 and aspartate 204. Glutamate 294 serves as the catalytic Nucleophile.

Belongs to the glycosyltransferase 6 family. Requires Mn(2+) as cofactor.

Its subcellular location is the golgi apparatus membrane. It functions in the pathway protein modification; protein glycosylation. Functionally, may catalyze the formation of some glycolipid via the addition of N-acetylgalactosamine (GalNAc) in alpha-1,3-linkage to some substrate. Glycolipids probably serve for adherence of some pathogens. The chain is Globoside alpha-1,3-N-acetylgalactosaminyltransferase 1 from Gallus gallus (Chicken).